The sequence spans 559 residues: Intestinal-type alkaline phosphatase (559 aa).

Residues methionine 1–serine 19 form the signal peptide. A Mg(2+)-binding site is contributed by aspartate 61. Zn(2+)-binding residues include aspartate 61 and serine 111. The active-site Phosphoserine intermediate is the serine 111. A disulfide bridge links cysteine 140 with cysteine 202. Asparagine 141 carries an N-linked (GlcNAc...) asparagine glycan. A Mg(2+)-binding site is contributed by serine 174. Glutamate 235 provides a ligand contact to Ca(2+). Asparagine 241 carries N-linked (GlcNAc...) asparagine glycosylation. Ca(2+) contacts are provided by phenylalanine 288, glutamate 289, and aspartate 304. Glutamate 330 contacts Mg(2+). Zn(2+) contacts are provided by aspartate 335, histidine 339, aspartate 376, and histidine 377. Asparagine 426 carries an N-linked (GlcNAc...) asparagine glycan. Histidine 450 serves as a coordination point for Zn(2+). Residues cysteine 485 and cysteine 492 are joined by a disulfide bond. Residues proline 496–arginine 531 form a disordered region. A compositionally biased stretch (low complexity) spans threonine 503–threonine 524. A lipid anchor (GPI-anchor amidated asparagine) is attached at asparagine 528. Residues serine 529 to serine 559 constitute a propeptide, removed in mature form.

Belongs to the alkaline phosphatase family. As to quaternary structure, homodimer. Requires Mg(2+) as cofactor. Zn(2+) serves as cofactor. It depends on Ca(2+) as a cofactor. Intestine and thymus.

The protein localises to the cell membrane. The catalysed reaction is a phosphate monoester + H2O = an alcohol + phosphate. Alkaline phosphatase that can hydrolyze various phosphate compounds. This Mus musculus (Mouse) protein is Intestinal-type alkaline phosphatase (Iap).